Consider the following 450-residue polypeptide: tRNA-2-methylthio-N(6)-dimethylallyladenosine synthase (450 aa).

The 118-residue stretch at 2 to 119 (KKVFVKTYGC…LPDLIARRQR (118 aa)) folds into the MTTase N-terminal domain. Residues Cys11, Cys48, Cys82, Cys156, Cys160, and Cys163 each coordinate [4Fe-4S] cluster. One can recognise a Radical SAM core domain in the interval 142–375 (RVEGPSAFVS…QATIEENVQR (234 aa)). A TRAM domain is found at 378–448 (QGMVGTVQRI…PHSLRGEIVV (71 aa)).

It belongs to the methylthiotransferase family. MiaB subfamily. Monomer. [4Fe-4S] cluster is required as a cofactor.

The protein resides in the cytoplasm. The catalysed reaction is N(6)-dimethylallyladenosine(37) in tRNA + (sulfur carrier)-SH + AH2 + 2 S-adenosyl-L-methionine = 2-methylsulfanyl-N(6)-dimethylallyladenosine(37) in tRNA + (sulfur carrier)-H + 5'-deoxyadenosine + L-methionine + A + S-adenosyl-L-homocysteine + 2 H(+). Functionally, catalyzes the methylthiolation of N6-(dimethylallyl)adenosine (i(6)A), leading to the formation of 2-methylthio-N6-(dimethylallyl)adenosine (ms(2)i(6)A) at position 37 in tRNAs that read codons beginning with uridine. This is tRNA-2-methylthio-N(6)-dimethylallyladenosine synthase from Cupriavidus taiwanensis (strain DSM 17343 / BCRC 17206 / CCUG 44338 / CIP 107171 / LMG 19424 / R1) (Ralstonia taiwanensis (strain LMG 19424)).